The chain runs to 301 residues: Methionyl-tRNA formyltransferase (301 aa).

110–113 contributes to the (6S)-5,6,7,8-tetrahydrofolate binding site; sequence SLLP.

Belongs to the Fmt family.

The enzyme catalyses L-methionyl-tRNA(fMet) + (6R)-10-formyltetrahydrofolate = N-formyl-L-methionyl-tRNA(fMet) + (6S)-5,6,7,8-tetrahydrofolate + H(+). Its function is as follows. Attaches a formyl group to the free amino group of methionyl-tRNA(fMet). The formyl group appears to play a dual role in the initiator identity of N-formylmethionyl-tRNA by promoting its recognition by IF2 and preventing the misappropriation of this tRNA by the elongation apparatus. The chain is Methionyl-tRNA formyltransferase from Anaplasma phagocytophilum (strain HZ).